The following is a 235-amino-acid chain: Large ribosomal subunit protein uL1 (235 aa).

This sequence belongs to the universal ribosomal protein uL1 family. As to quaternary structure, part of the 50S ribosomal subunit.

Binds directly to 23S rRNA. The L1 stalk is quite mobile in the ribosome, and is involved in E site tRNA release. Functionally, protein L1 is also a translational repressor protein, it controls the translation of the L11 operon by binding to its mRNA. The chain is Large ribosomal subunit protein uL1 from Citrobacter koseri (strain ATCC BAA-895 / CDC 4225-83 / SGSC4696).